The sequence spans 91 residues: Early E3B 10.4 kDa protein (91 aa).

Positions 1–22 (MIPRNFFFTILICAFNVCATFT) are cleaved as a signal peptide. Residues 23–34 (AVATASPDCIGP) are Lumenal-facing. The chain crosses the membrane as a helical span at residues 35 to 60 (FASYALFAFVTCICVCSIVCLVINFF). Residues 61 to 91 (QLVDWIFVRIAYLRHHPEYRNQNVAALLRLI) lie on the Cytoplasmic side of the membrane.

This sequence belongs to the adenoviridae E3B family.

It localises to the host endoplasmic reticulum membrane. Functionally, down-regulates the EGF receptor. In Homo sapiens (Human), this protein is Early E3B 10.4 kDa protein.